The sequence spans 130 residues: MSAKTDEILESLKTLSLLEASELVKQIEEAFGVSAAASAGVVMAAPGAAGAGGGEAAEEKTEFDVVLESFDASAKIKVLKAVREATGLGLGDAKAMVEAAPKAIKEGVSKDEAEALKKAIEEVGGKVTLK.

It belongs to the bacterial ribosomal protein bL12 family. As to quaternary structure, homodimer. Part of the ribosomal stalk of the 50S ribosomal subunit. Forms a multimeric L10(L12)X complex, where L10 forms an elongated spine to which 2 to 4 L12 dimers bind in a sequential fashion. Binds GTP-bound translation factors.

Forms part of the ribosomal stalk which helps the ribosome interact with GTP-bound translation factors. Is thus essential for accurate translation. This chain is Large ribosomal subunit protein bL12, found in Synechococcus sp. (strain WH7803).